The sequence spans 275 residues: NH(3)-dependent NAD(+) synthetase (275 aa).

46-53 (GISGGQDS) is an ATP binding site. Asp-52 is a Mg(2+) binding site. Arg-140 is a binding site for deamido-NAD(+). Thr-160 serves as a coordination point for ATP. Glu-165 lines the Mg(2+) pocket. The deamido-NAD(+) site is built by Lys-173 and Asp-180. Positions 189 and 211 each coordinate ATP. 260 to 261 (HK) provides a ligand contact to deamido-NAD(+).

The protein belongs to the NAD synthetase family. In terms of assembly, homodimer.

It carries out the reaction deamido-NAD(+) + NH4(+) + ATP = AMP + diphosphate + NAD(+) + H(+). Its pathway is cofactor biosynthesis; NAD(+) biosynthesis; NAD(+) from deamido-NAD(+) (ammonia route): step 1/1. In terms of biological role, catalyzes the ATP-dependent amidation of deamido-NAD to form NAD. Uses ammonia as a nitrogen source. In Salmonella enteritidis PT4 (strain P125109), this protein is NH(3)-dependent NAD(+) synthetase.